A 287-amino-acid polypeptide reads, in one-letter code: Putative DNA-3-methyladenine glycosylase YfjP (287 aa).

Asp-242 serves as the catalytic Proton acceptor.

This sequence belongs to the alkylbase DNA glycosidase AlkA family.

It carries out the reaction Hydrolysis of alkylated DNA, releasing 3-methyladenine, 3-methylguanine, 7-methylguanine and 7-methyladenine.. In terms of biological role, hydrolysis of the deoxyribose N-glycosidic bond to excise 3-methyladenine, 3-methylguanine, 7-methylguanine, O2-methylthymine, and O2-methylcytosine from the damaged DNA polymer formed by alkylation lesions. This is Putative DNA-3-methyladenine glycosylase YfjP (yfjP) from Bacillus subtilis (strain 168).